The sequence spans 443 residues: Tol-Pal system protein TolB (443 aa).

Positions 1–33 (MKIGIINTKIRTVFSAFACMIAASLVCTMPARA) are cleaved as a signal peptide.

It belongs to the TolB family. In terms of assembly, the Tol-Pal system is composed of five core proteins: the inner membrane proteins TolA, TolQ and TolR, the periplasmic protein TolB and the outer membrane protein Pal. They form a network linking the inner and outer membranes and the peptidoglycan layer.

The protein resides in the periplasm. In terms of biological role, part of the Tol-Pal system, which plays a role in outer membrane invagination during cell division and is important for maintaining outer membrane integrity. The sequence is that of Tol-Pal system protein TolB from Brucella canis (strain ATCC 23365 / NCTC 10854 / RM-666).